Here is a 192-residue protein sequence, read N- to C-terminus: UPF0149 protein YgfB (192 aa).

The protein belongs to the UPF0149 family.

In Escherichia coli O127:H6 (strain E2348/69 / EPEC), this protein is UPF0149 protein YgfB.